Consider the following 654-residue polypeptide: Collagen alpha-1(XXV) chain (654 aa).

The segment at 1–26 is disordered; it reads MLLKKHAGKGGGREPRSEDPTPAEQH. Over 1–33 the chain is Cytoplasmic; the sequence is MLLKKHAGKGGGREPRSEDPTPAEQHCARTMPP. The helical; Signal-anchor for type II membrane protein transmembrane segment at 34–54 threads the bilayer; sequence CAVLAALLSVVAVVSCLYLGV. Residues 55-654 lie on the Extracellular side of the membrane; sequence KTNDLQARIA…GLPMPGCWQK (600 aa). Glu-113 carries the pyrrolidone carboxylic acid (Glu) modification. The disordered stretch occupies residues 116 to 168; that stretch reads SECNCPAGPPGKRGKRGRRGESGPPGQPGPQGPPGPKGDKGEQGDQGPRMVFP. In terms of domain architecture, Collagen-like 1 spans 121 to 164; the sequence is PAGPPGKRGKRGRRGESGPPGQPGPQGPPGPKGDKGEQGDQGPR. Residues 140–151 show a composition bias toward pro residues; it reads PGQPGPQGPPGP. The interval 181 to 188 is interaction with amyloid-beta peptide; sequence LIKRRLIK. 2 disordered regions span residues 189-426 and 445-654; these read GDQG…QGAT and LTVT…CWQK. 5 consecutive Collagen-like domains span residues 192-247, 249-308, 311-370, 372-425, and 447-505; these read GQAG…QKGS, GAPG…PGSS, GIKG…AGPP, RGER…DQGA, and VTGP…PGLP. The span at 196–208 shows a compositional bias: pro residues; it reads PPGPPGPPGPRGP. Low complexity predominate over residues 230–245; it reads PGEQGLMGPLGPPGQK. Over residues 280 to 290 the composition is skewed to basic and acidic residues; that stretch reads EPGEQGEKGDA. Residues 336-358 show a composition bias toward low complexity; that stretch reads LPGIKGEPGFIGPQGEPGLPGLP. Basic and acidic residues-rich tracts occupy residues 361–377 and 398–407; these read KGER…ERGE and SKGDRGEKGD. Residues 457-466 show a composition bias toward low complexity; that stretch reads QGLQGPKGEQ. Over residues 494-503 the composition is skewed to gly residues; sequence GEKGGIGLPG. The segment covering 517–527 has biased composition (low complexity); that stretch reads SGMPGPQGPSI. Pro residues predominate over residues 528–543; sequence IGPPGPPGPHGPPGPM. The Collagen-like 7 domain occupies 571 to 630; that stretch reads GEKGAMGEPGPRGPYGLPGKDGEPGLDGFPGPRGEKGDLGEKGEKGFRGVKGEKGEPGQP. Over residues 603–626 the composition is skewed to basic and acidic residues; it reads RGEKGDLGEKGEKGFRGVKGEKGE.

As to quaternary structure, forms homodimers and homotrimers. Binds to the fibrillized forms of amyloid-beta protein 40 (beta-APP40) and amyloid-beta protein 42 (beta-APP42). Found associated with beta-APP42 more frequently than with beta-APP40. Post-translationally, undergoes proteolytic cleavage by furin protease to yield the soluble collagen-like Alzheimer amyloid plaque component. Glycosylated. In terms of processing, hydroxylated on 11% of proline residues and 49% of lysine residues. In terms of tissue distribution, expressed predominantly in brain. Deposited preferentially in primitive or neuritic amyloid plaques which are typical of Alzheimer disease.

The protein localises to the membrane. Its function is as follows. Inhibits fibrillization of amyloid-beta peptide during the elongation phase. Has also been shown to assemble amyloid fibrils into protease-resistant aggregates. Binds heparin. The sequence is that of Collagen alpha-1(XXV) chain from Homo sapiens (Human).